A 212-amino-acid polypeptide reads, in one-letter code: Large ribosomal subunit protein uL3 (212 aa).

Residue Gln-153 is modified to N5-methylglutamine.

The protein belongs to the universal ribosomal protein uL3 family. Part of the 50S ribosomal subunit. Forms a cluster with proteins L14 and L19. Methylated by PrmB.

In terms of biological role, one of the primary rRNA binding proteins, it binds directly near the 3'-end of the 23S rRNA, where it nucleates assembly of the 50S subunit. The chain is Large ribosomal subunit protein uL3 from Shewanella pealeana (strain ATCC 700345 / ANG-SQ1).